A 106-amino-acid polypeptide reads, in one-letter code: Large ribosomal subunit protein eL42 (106 aa).

Belongs to the eukaryotic ribosomal protein eL42 family.

In Cyberlindnera jadinii (Torula yeast), this protein is Large ribosomal subunit protein eL42 (RPL44).